The primary structure comprises 126 residues: 5-carboxymethyl-2-hydroxymuconate Delta-isomerase (126 aa).

Residue Pro2 is the Proton acceptor; via imino nitrogen of the active site.

As to quaternary structure, homotrimer.

It carries out the reaction (2E,4Z)-5-hydroxypenta-2,4-diene-1,2,5-tricarboxylate = (3E,5R)-5-carboxy-2-oxohept-3-enedioate. It participates in aromatic compound metabolism; 4-hydroxyphenylacetate degradation; pyruvate and succinate semialdehyde from 4-hydroxyphenylacetate: step 4/7. Transforms 5-carboxymethyl-2-hydroxy-muconic acid (CHM) into 5-oxo-pent-3-ene-1,2,5-tricarboxylic acid (OPET). This Escherichia coli protein is 5-carboxymethyl-2-hydroxymuconate Delta-isomerase (hpcD).